The chain runs to 310 residues: N-acetyl-gamma-glutamyl-phosphate reductase (310 aa).

The active site involves Cys-117.

This sequence belongs to the NAGSA dehydrogenase family. Type 2 subfamily.

The protein localises to the cytoplasm. The enzyme catalyses N-acetyl-L-glutamate 5-semialdehyde + phosphate + NADP(+) = N-acetyl-L-glutamyl 5-phosphate + NADPH + H(+). Its pathway is amino-acid biosynthesis; L-arginine biosynthesis; N(2)-acetyl-L-ornithine from L-glutamate: step 3/4. Functionally, catalyzes the NADPH-dependent reduction of N-acetyl-5-glutamyl phosphate to yield N-acetyl-L-glutamate 5-semialdehyde. The chain is N-acetyl-gamma-glutamyl-phosphate reductase from Rhizobium rhizogenes (strain K84 / ATCC BAA-868) (Agrobacterium radiobacter).